The following is a 265-amino-acid chain: MDNLTKVREYLKSYSRLDQAVGEIDEIEAQRAEKSNYELFQEDGVEEHTKPSYFQAADDSDTESEPEIEDNQGLYAQDPEAEQVEGFIQGPLDDYADEEVDVVFTSDWKPPELESDEHGKTLRLTSPEGLSGEQKSQWLSTIKAVVQSAKYWNLAECTFEASGEGVIMKERQITPDVYKVTPVMNTHPSQSEAVSDVWSLSKTSMTFQPKKASLQPLTISLDELFSSRGEFISVGGDGRMSHKEAILLGLRYKKLYNQARVKYSL.

Residues 1 to 60 are interaction with N(0); it reads MDNLTKVREYLKSYSRLDQAVGEIDEIEAQRAEKSNYELFQEDGVEEHTKPSYFQAADDS. Position 14 is a phosphotyrosine; by host (Tyr14). The interval 35-77 is disordered; the sequence is SNYELFQEDGVEEHTKPSYFQAADDSDTESEPEIEDNQGLYAQ. The interaction with the L polymerase stretch occupies residues 49-105; that stretch reads TKPSYFQAADDSDTESEPEIEDNQGLYAQDPEAEQVEGFIQGPLDDYADEEVDVVFT. A compositionally biased stretch (acidic residues) spans 58-70; that stretch reads DDSDTESEPEIED. Phosphoserine; by host CK2 is present on Ser60. Thr62 carries the phosphothreonine; by host CK2 modification. Ser64 carries the phosphoserine; by host CK2 modification. An oligomerization region spans residues 109–170; that stretch reads KPPELESDEH…ASGEGVIMKE (62 aa). A hinge region spans residues 171-193; that stretch reads RQITPDVYKVTPVMNTHPSQSEA. Phosphoserine; by host is present on residues Ser226 and Ser227. Ser233 carries the phosphoserine modification. Positions 245–265 are interaction with the Nucleoprotein-RNA and template-binding; the sequence is AILLGLRYKKLYNQARVKYSL.

Belongs to the vesiculovirus protein P family. Homodimer. Interacts with the L polymerase; the association of P and L forms the polymerase complex and positions P optimally for encapsidation of newly synthesized genomes with the nucleoprotein. Interacts (via N-terminus) with N(0). Interacts (via C-terminus) with N in ribonucleocapsid (via C-terminus); this interaction allows to package the L polymerase in the virion and positions the polymerase on the template, since P acts as a bridge between N and L. Phosphorylated in the N-terminus by host CK2. Phosphorylation of the phosphoprotein is required for the transcriptional function of the P-L complex.

It localises to the virion. The protein resides in the host cytoplasm. Its function is as follows. Nonenzymatic cofactor regulating the function and conformation of the RNA polymerase and part of the transcription and replication complex. Binds the viral ribonucleocapsid and positions the L polymerase on the template. Acts as a chaperone for newly synthesized free N protein, so-called N(0). Plays a role in virion assembly by acting as a bridge between N and L. This chain is Phosphoprotein (P), found in Vesicular stomatitis Indiana virus (strain San Juan) (VSIV).